Consider the following 291-residue polypeptide: Tyrosine isonitrile desaturase (291 aa).

The Fe cation site is built by His-110, Asp-112, and His-259.

Belongs to the TfdA dioxygenase family. As to quaternary structure, homotrimer in solution. Requires Fe(2+) as cofactor.

The enzyme catalyses (2S)-3-(4-hydroxyphenyl)-2-isocyanopropanoate + 2-oxoglutarate + O2 = (2E)-3-(4-hydroxyphenyl)-2-isocyanoprop-2-enoate + succinate + CO2 + H2O. Involved in the biosynthesis of paerucumarin, a cyclized isocyano derivative of tyrosine. Catalyzes the 2-oxoglutarate-dependent oxidation of tyrosine isonitrile. The sequence is that of Tyrosine isonitrile desaturase from Pseudomonas aeruginosa (strain ATCC 15692 / DSM 22644 / CIP 104116 / JCM 14847 / LMG 12228 / 1C / PRS 101 / PAO1).